The chain runs to 278 residues: Energy-coupling factor transporter ATP-binding protein EcfA (278 aa).

One can recognise an ABC transporter domain in the interval 4-239 (LETRDLKYSY…SETVRSANLR (236 aa)). 37–44 (GPNGAGKS) lines the ATP pocket.

It belongs to the ABC transporter superfamily. Energy-coupling factor EcfA family. Forms a stable energy-coupling factor (ECF) transporter complex composed of 2 membrane-embedded substrate-binding proteins (S component), 2 ATP-binding proteins (A component) and 2 transmembrane proteins (T component).

It is found in the cell membrane. Its function is as follows. ATP-binding (A) component of a common energy-coupling factor (ECF) ABC-transporter complex. Unlike classic ABC transporters this ECF transporter provides the energy necessary to transport a number of different substrates. The protein is Energy-coupling factor transporter ATP-binding protein EcfA of Methanococcus maripaludis (strain DSM 14266 / JCM 13030 / NBRC 101832 / S2 / LL).